A 118-amino-acid polypeptide reads, in one-letter code: MRWALLVLLAFLSPASQKSSNLEGRTKSVTRQTGSSAEITCDLTVTNTFYIHWYLHQEGKAPQRLLYYDVSTARDVLESGLSPGKYYTHTPRRWSWILRLQNLIENDSGVYYCATWDR.

The signal sequence occupies residues Met1–Gln17. The Ig-like domain maps to Lys18–Arg118. Cys41 and Cys113 are joined by a disulfide. N-linked (GlcNAc...) asparagine glycosylation is present at Asn106.

Gamma-delta TR is a heterodimer composed of a gamma and delta chain; disulfide-linked. The gamma-delta TR is associated with the transmembrane signaling CD3 coreceptor proteins following the stoichiometry: a single gamma-delta TR heterodimer associates with one CD3D-CD3E heterodimer, one CD3G-CD3E heterodimer and one CD247 homodimer forming a stable octameric structure. Upon activation, gamma-delta TR complex associates with FCER1G to initiate intracellular signaling.

Its subcellular location is the cell membrane. In terms of biological role, v region of the variable domain of T cell receptor (TR) gamma chain that participates in the antigen recognition. Gamma-delta TRs recognize a variety of self and foreign non-peptide antigens frequently expressed at the epithelial boundaries between the host and external environment, including endogenous lipids presented by MH-like protein CD1D and phosphoantigens presented by butyrophilin-like molecule BTN3A1. Upon antigen recognition induces rapid, innate-like immune responses involved in pathogen clearance and tissue repair. Binding of gamma-delta TR complex to antigen triggers phosphorylation of immunoreceptor tyrosine-based activation motifs (ITAMs) in the CD3 chains by the LCK and FYN kinases, allowing the recruitment, phosphorylation, and activation of ZAP70 that facilitates phosphorylation of the scaffolding proteins LCP2 and LAT. This lead to the formation of a supramolecular signalosome that recruits the phospholipase PLCG1, resulting in calcium mobilization and ERK activation, ultimately leading to T cell expansion and differentiation into effector cells. Gamma-delta TRs are produced through somatic rearrangement of a limited repertoire of variable (V), diversity (D), and joining (J) genes. The potential diversity of gamma-delta TRs is conferred by the unique ability to rearrange (D) genes in tandem and to utilize all three reading frames. The combinatorial diversity is considerably increased by the sequence exonuclease trimming and random nucleotide (N) region additions which occur during the V-(D)-J rearrangements. The sequence is that of T cell receptor gamma variable 3 from Homo sapiens (Human).